We begin with the raw amino-acid sequence, 808 residues long: Phospholipase D alpha 1 (808 aa).

Residues 1-125 (MSKVLLHGTL…LDGDEVDKWI (125 aa)) enclose the C2 domain. D186 provides a ligand contact to Ca(2+). In terms of domain architecture, PLD phosphodiesterase 1 spans 326–364 (TMFTHHQKIVVVDHELPRGGSQKRRVMSFVGGIDLCDGR). Residues H331, K333, and D338 contribute to the active site. Position 331 (H331) interacts with a 1,2-diacyl-sn-glycero-3-phosphate. Ca(2+)-binding residues include H370 and H404. Positions 520 and 659 each coordinate a 1,2-diacyl-sn-glycero-3-phosphate. Residues 654 to 681 (FMIYVHSKMMIVDDEYIIVGSANINQRS) form the PLD phosphodiesterase 2 domain. Residues H659, K661, and D666 contribute to the active site. E720 contributes to the Ca(2+) binding site.

Belongs to the phospholipase D family. C2-PLD subfamily. In terms of assembly, interacts (via C2 domain) with CARDA (via RGD or KGE motifs). Ca(2+) is required as a cofactor.

It catalyses the reaction a 1,2-diacyl-sn-glycero-3-phosphocholine + H2O = a 1,2-diacyl-sn-glycero-3-phosphate + choline + H(+). In terms of biological role, hydrolyzes glycerol-phospholipids at the terminal phosphodiesteric bond. Plays an important role in various cellular processes. The sequence is that of Phospholipase D alpha 1 from Cynara cardunculus (Cardoon).